The chain runs to 911 residues: SH3 and PX domain-containing protein 2B (911 aa).

One can recognise a PX domain in the interval 5 to 129; that stretch reads RSIVEVKVLD…QFFETRPEDL (125 aa). Tyr-25 is modified (phosphotyrosine). SH3 domains follow at residues 152–211 and 221–280; these read MVLE…GQDG and EEEE…KNSG. Residues 275–366 form a disordered region; that stretch reads LKKNSGEPLP…GLNLPKPPIP (92 aa). Ser-279 and Ser-291 each carry phosphoserine. The span at 282 to 292 shows a compositional bias: pro residues; that stretch reads PLPPKPGPGSP. Residues 311–337 are compositionally biased toward basic and acidic residues; that stretch reads GREKELLSSQRDGRFEGRPVPDGDAKQ. Residues 338 to 347 are compositionally biased toward basic residues; sequence RSPKMRQRPP. One can recognise an SH3 3 domain in the interval 368–427; sequence QVEEEYYTIAEFQTTIPDGISFQAGLKVEVIEKNLSGWWYIQIEDKEGWAPATFIDKYKK. Residues 458–834 form a disordered region; that stretch reads NTGSEATGPS…GPWGTGKIGE (377 aa). Composition is skewed to basic and acidic residues over residues 486 to 499, 517 to 548, 571 to 586, 598 to 609, and 618 to 628; these read KDWK…RKAS, EEKP…RTEQ, PARD…DKSR, CGHKVLAKEVKK, and SKTDLPEEKPD. 2 positions are modified to phosphoserine: Ser-499 and Ser-528. 2 stretches are compositionally biased toward pro residues: residues 643 to 653 and 756 to 766; these read RPKPAPSPKTE and VVPPRRPPPPK. A compositionally biased stretch (gly residues) spans 822–831; that stretch reads GSLGPWGTGK. Ser-843 bears the Phosphoserine mark. The 62-residue stretch at 850 to 911 folds into the SH3 4 domain; sequence LKDSLYVAVA…IPSNYLRKKP (62 aa).

The protein belongs to the SH3PXD2 family. In terms of assembly, interacts with ADAM15. Interacts with NOXO1. Interacts (via SH3 domains) with NOXA1; the interaction is direct. Interacts with FASLG. Phosphorylated in SRC-transformed cells. In terms of tissue distribution, expressed in fibroblasts.

It localises to the cytoplasm. The protein resides in the cell projection. Its subcellular location is the podosome. Adapter protein involved in invadopodia and podosome formation and extracellular matrix degradation. Binds matrix metalloproteinases (ADAMs), NADPH oxidases (NOXs) and phosphoinositides. Acts as an organizer protein that allows NOX1- or NOX3-dependent reactive oxygen species (ROS) generation and ROS localization. Plays a role in mitotic clonal expansion during the immediate early stage of adipocyte differentiation. The protein is SH3 and PX domain-containing protein 2B (SH3PXD2B) of Homo sapiens (Human).